The sequence spans 450 residues: GTPase HflX (450 aa).

2 disordered regions span residues 79-110 and 173-196; these read TSMAPPPKSKARQRFEGAAEGAAPPEPDPDAA and RLRESSGGGGRQQGPGAGESTLAL. Gly residues predominate over residues 178-189; it reads SGGGGRQQGPGA. Positions 230–395 constitute a Hflx-type G domain; it reads LRVALVGYTN…TLIAFFEAEM (166 aa). GTP-binding positions include 236-243, 261-265, 283-286, 349-352, and 373-375; these read GYTNAGKS, FATLD, DTVG, NKMD, and SAH. 2 residues coordinate Mg(2+): S243 and T263.

The protein belongs to the TRAFAC class OBG-HflX-like GTPase superfamily. HflX GTPase family. As to quaternary structure, monomer. Associates with the 50S ribosomal subunit. It depends on Mg(2+) as a cofactor.

Its subcellular location is the cytoplasm. In terms of biological role, GTPase that associates with the 50S ribosomal subunit and may have a role during protein synthesis or ribosome biogenesis. The protein is GTPase HflX of Gluconacetobacter diazotrophicus (strain ATCC 49037 / DSM 5601 / CCUG 37298 / CIP 103539 / LMG 7603 / PAl5).